The following is a 331-amino-acid chain: Cytosolic sulfotransferase 1 (331 aa).

Residue 74 to 79 coordinates 3'-phosphoadenylyl sulfate; it reads KSGTTW. The active-site Proton acceptor is histidine 143. 3'-phosphoadenylyl sulfate is bound by residues arginine 165, serine 173, tyrosine 231, and 297–299; that span reads RKG.

Belongs to the sulfotransferase 1 family.

Its subcellular location is the cytoplasm. Functionally, sulfotransferase that utilizes 3'-phospho-5'-adenylyl sulfate (PAPS) as sulfonate donor. This Arabidopsis thaliana (Mouse-ear cress) protein is Cytosolic sulfotransferase 1 (SOT1).